A 146-amino-acid polypeptide reads, in one-letter code: Hemoglobin subunit beta (146 aa).

V1 is subject to N-acetylvaline. Residues 2–146 (HLSGGEKSAV…VAHALGHKYH (145 aa)) form the Globin domain. T12 bears the Phosphothreonine mark. K59 is subject to N6-acetyllysine. H63 serves as a coordination point for heme b. Residue K82 is modified to N6-acetyllysine. H92 is a heme b binding site. C93 is modified (S-nitrosocysteine). K144 carries the N6-acetyllysine modification.

Belongs to the globin family. As to quaternary structure, heterotetramer of two alpha chains and two beta chains. As to expression, red blood cells.

Involved in oxygen transport from the lung to the various peripheral tissues. This Ornithorhynchus anatinus (Duckbill platypus) protein is Hemoglobin subunit beta (HBB).